We begin with the raw amino-acid sequence, 145 residues long: D-aminoacyl-tRNA deacylase (145 aa).

The short motif at 137-138 is the Gly-cisPro motif, important for rejection of L-amino acids element; sequence GP.

The protein belongs to the DTD family. In terms of assembly, homodimer.

The protein localises to the cytoplasm. The enzyme catalyses glycyl-tRNA(Ala) + H2O = tRNA(Ala) + glycine + H(+). It catalyses the reaction a D-aminoacyl-tRNA + H2O = a tRNA + a D-alpha-amino acid + H(+). An aminoacyl-tRNA editing enzyme that deacylates mischarged D-aminoacyl-tRNAs. Also deacylates mischarged glycyl-tRNA(Ala), protecting cells against glycine mischarging by AlaRS. Acts via tRNA-based rather than protein-based catalysis; rejects L-amino acids rather than detecting D-amino acids in the active site. By recycling D-aminoacyl-tRNA to D-amino acids and free tRNA molecules, this enzyme counteracts the toxicity associated with the formation of D-aminoacyl-tRNA entities in vivo and helps enforce protein L-homochirality. This is D-aminoacyl-tRNA deacylase from Shewanella sediminis (strain HAW-EB3).